We begin with the raw amino-acid sequence, 306 residues long: Ribonuclease BN (306 aa).

Positions 64, 66, 68, 69, 141, 212, and 270 each coordinate Zn(2+). Catalysis depends on D68, which acts as the Proton acceptor.

Belongs to the RNase Z family. RNase BN subfamily. In terms of assembly, homodimer. Zn(2+) serves as cofactor.

In terms of biological role, zinc phosphodiesterase, which has both exoribonuclease and endoribonuclease activities. The protein is Ribonuclease BN of Klebsiella pneumoniae (strain 342).